The sequence spans 346 residues: O-methyltransferase atr3 (346 aa).

Disordered regions lie at residues Met-1–Met-22 and Gly-52–Ala-88. S-adenosyl-L-methionine contacts are provided by residues Asp-190 to Leu-191 and Asp-217 to Ile-218.

Belongs to the class I-like SAM-binding methyltransferase superfamily. As to quaternary structure, homodimer.

The enzyme catalyses 4-O-demethylbarbatate + S-adenosyl-L-methionine = proatranorin I + S-adenosyl-L-homocysteine. Its pathway is secondary metabolite biosynthesis; terpenoid biosynthesis. Its function is as follows. O-methyltransferase; part of the gene cluster that mediates the biosynthesis of atranorin, a depside of polyketide origin that accumulates in the cortical or medullary layers of lichen thalli. Atr3 methylates the carboxyl group of 4-O-demethylbarbatic acid to yield proatranorin I. Atr3 is also able to methylate the atr2 product proatranorin III to produce the final compound atranorin. The first step in the pathway is performed by the non-reducing polyketide synthase atr1 that produces 4-O-demethylbarbatic acid composed of two 3-methylorsellinic acid (3MOA) moieties. The pathway continues with the actions of the cytochrome P450 monooygenase atr2 that catalizes the oxidation of c-9 and the O-methyltransferase atr3 that performs the methylation of the carboxyl group to yield atranorin, via the proatranorin II and III intermediates if atr2 acts first, or the proatranorin I intermediate if atr3 acts first. The polypeptide is O-methyltransferase atr3 (Stereocaulon alpinum (Alpine snow lichen)).